The sequence spans 257 residues: Triosephosphate isomerase (257 aa).

9 to 11 (NWK) is a substrate binding site. Histidine 95 acts as the Electrophile in catalysis. The active-site Proton acceptor is glutamate 168. Residues glycine 174, serine 213, and 234–235 (GG) contribute to the substrate site.

It belongs to the triosephosphate isomerase family. Homodimer.

The protein resides in the cytoplasm. The enzyme catalyses D-glyceraldehyde 3-phosphate = dihydroxyacetone phosphate. Its pathway is carbohydrate biosynthesis; gluconeogenesis. It participates in carbohydrate degradation; glycolysis; D-glyceraldehyde 3-phosphate from glycerone phosphate: step 1/1. Its function is as follows. Involved in the gluconeogenesis. Catalyzes stereospecifically the conversion of dihydroxyacetone phosphate (DHAP) to D-glyceraldehyde-3-phosphate (G3P). The polypeptide is Triosephosphate isomerase (Acidithiobacillus ferrooxidans (strain ATCC 23270 / DSM 14882 / CIP 104768 / NCIMB 8455) (Ferrobacillus ferrooxidans (strain ATCC 23270))).